The chain runs to 215 residues: Chaperone protein TorD (215 aa).

Belongs to the TorD/DmsD family. TorD subfamily.

It is found in the cytoplasm. Functionally, involved in the biogenesis of TorA. Acts on TorA before the insertion of the molybdenum cofactor and, as a result, probably favors a conformation of the apoenzyme that is competent for acquiring the cofactor. In Aliivibrio salmonicida (strain LFI1238) (Vibrio salmonicida (strain LFI1238)), this protein is Chaperone protein TorD.